Consider the following 234-residue polypeptide: MSRPVRNRKVVDYSQFQESDDADEDYGRDSGPPAKKIRSSPREAKNKRRSGKNSQEDSEDSEEKDVKTKKDDSHSAEDSEDEKDDHKNVRQQRQAASKAASKQREMLLEDVGSEEEPEEDDEAPFQEKDSGSDEDFLMEDDDDSDYGSSKKKNKKMVKKSKPERKEKKMPKPRLKATVTPSPVKGKAKVGRPTASKKSKEKTPSPKEEDEEAESPPEKKSGDEGSEDEASSGED.

The disordered stretch occupies residues 1–234 (MSRPVRNRKV…SEDEASSGED (234 aa)). A Phosphotyrosine modification is found at Tyr13. Residues Ser14 and Ser19 each carry the phosphoserine modification. Tyr26 bears the Phosphotyrosine mark. A compositionally biased stretch (basic residues) spans 35-51 (KKIRSSPREAKNKRRSG). Ser54, Ser58, Ser61, Ser73, Ser75, and Ser79 each carry phosphoserine. Positions 64–77 (KDVKTKKDDSHSAE) are enriched in basic and acidic residues. Residues 91–100 (QQRQAASKAA) show a composition bias toward low complexity. Over residues 111–124 (VGSEEEPEEDDEAP) the composition is skewed to acidic residues. Ser113, Ser130, Ser132, and Ser144 each carry phosphoserine. Residues 132-145 (SDEDFLMEDDDDSD) are compositionally biased toward acidic residues. The span at 149–174 (SKKKNKKMVKKSKPERKEKKMPKPRL) shows a compositional bias: basic residues. At Thr179 the chain carries Phosphothreonine. Residue Ser181 is modified to Phosphoserine. A compositionally biased stretch (basic residues) spans 185 to 199 (GKAKVGRPTASKKSK). Thr202 is modified (phosphothreonine). Phosphoserine occurs at positions 204, 214, 225, and 231. Over residues 223–234 (EGSEDEASSGED) the composition is skewed to acidic residues.

In terms of assembly, does not interact with RAD51. In terms of processing, phosphorylated in an ATM-dependent manner in response to DNA damage. Phosphorylated by CDK1 and casein kinase.

The protein localises to the nucleus. The protein resides in the chromosome. Its function is as follows. Chromatin-associated protein involved in DNA repair by promoting homologous recombination (HR). Binds double-stranded DNA (dsDNA) and secondary DNA structures, such as D-loop structures, but with less affinity than RAD51AP1. This is Nuclear ubiquitous casein and cyclin-dependent kinase substrate 1 (Nucks1) from Mus musculus (Mouse).